We begin with the raw amino-acid sequence, 99 residues long: MKSMIAVLLLALVATSMAGYLGLGYGGLYGAYGGLYGAGVPVGRAVAYSSSIRHPGFGGLGVLGGYGGYGYGLGLGAYGYGGYGLGYGLGLGLGHGKIW.

An N-terminal signal peptide occupies residues 1 to 18; the sequence is MKSMIAVLLLALVATSMA.

This sequence belongs to the non-disulfide-bridged peptide (NDBP) superfamily. Expressed by the venom gland.

The protein resides in the secreted. The chain is Glycine-rich protein from Lychas mucronatus (Chinese swimming scorpion).